Reading from the N-terminus, the 602-residue chain is Elongation factor 4 (602 aa).

In terms of domain architecture, tr-type G spans 5-187 (DHIRNFSIIA…ALVKRIPAPK (183 aa)). Residues 17–22 (DHGKST) and 134–137 (NKID) contribute to the GTP site.

Belongs to the TRAFAC class translation factor GTPase superfamily. Classic translation factor GTPase family. LepA subfamily.

It localises to the cell inner membrane. It carries out the reaction GTP + H2O = GDP + phosphate + H(+). In terms of biological role, required for accurate and efficient protein synthesis under certain stress conditions. May act as a fidelity factor of the translation reaction, by catalyzing a one-codon backward translocation of tRNAs on improperly translocated ribosomes. Back-translocation proceeds from a post-translocation (POST) complex to a pre-translocation (PRE) complex, thus giving elongation factor G a second chance to translocate the tRNAs correctly. Binds to ribosomes in a GTP-dependent manner. This chain is Elongation factor 4, found in Zymomonas mobilis subsp. mobilis (strain ATCC 31821 / ZM4 / CP4).